The sequence spans 549 residues: Cation/acetate symporter ActP (549 aa).

The Periplasmic portion of the chain corresponds to 1–32 (MKRVLTALAATLPFAANAADAISGAVERQPTN). Residues 33–55 (WQAIIMFLIFVVFTLGITYWASK) form a helical membrane-spanning segment. Over 56-75 (RVRSRNDYYTAGGNITGFQN) the chain is Cytoplasmic. Residues 76-98 (GLAIAGDYMSAASFLGISALVFT) traverse the membrane as a helical segment. The Periplasmic segment spans residues 99-102 (SGYD). Residues 103–125 (GLIYSLGFLVGWPIILFLIAERL) traverse the membrane as a helical segment. The Cytoplasmic portion of the chain corresponds to 126–145 (RNLGRYTFADVASYRLKQGP). Residues 146–168 (IRILSACGSLVVVALYLIAQMVG) traverse the membrane as a helical segment. Residues 169 to 182 (AGKLIELLFGLNYH) are Periplasmic-facing. A helical transmembrane segment spans residues 183 to 205 (IAVVLVGVLMMMYVLFGGMLATT). Residues 206–211 (WVQIIK) are Cytoplasmic-facing. The helical transmembrane segment at 212–234 (AVLLLFGASFMAFMVMKHVGFSF) threads the bilayer. Topologically, residues 235–263 (NNLFSEAMAVHPKGVDIMKPGGLVKDPIS) are periplasmic. Residues 264-286 (ALSLGLGLMFGTAGLPHILMHFF) traverse the membrane as a helical segment. At 287 to 297 (TVSDAREARKS) the chain is on the cytoplasmic side. Residues 298–320 (VFYATGFMGYFYILTFIIGFGAI) form a helical membrane-spanning segment. The Periplasmic segment spans residues 321 to 358 (MLVGANPEYKDAAGHLIGGNNMAAVHLANAVGGNLFLG). Residues 359-381 (FISAVAFATILAVVAGLTLAGAS) form a helical membrane-spanning segment. Residues 382-401 (AVSHDLYANVFKKGATEREE) are Cytoplasmic-facing. Residues 402–424 (LRVSKITVLILGVIAIILGVLFE) form a helical membrane-spanning segment. The Periplasmic portion of the chain corresponds to 425 to 427 (NQN). Residues 428–450 (IAFMVGLAFAIAASCNFPIILLS) form a helical membrane-spanning segment. Residues 451–461 (MYWSKLTTRGA) lie on the Cytoplasmic side of the membrane. The helical transmembrane segment at 462-484 (MLGGWLGLITAVVLMILGPTIWV) threads the bilayer. The Periplasmic segment spans residues 485-493 (QILGHEKAI). The chain crosses the membrane as a helical span at residues 494–516 (FPYEYPALFSISVAFLGIWLFSA). Residues 517-549 (TDNSAEGARERELFRAQFIRSQTGFGVEQGRAH) are Cytoplasmic-facing.

Belongs to the sodium:solute symporter (SSF) (TC 2.A.21) family.

The protein resides in the cell inner membrane. In terms of biological role, transports acetate. The sequence is that of Cation/acetate symporter ActP (actP) from Escherichia coli O6:H1 (strain CFT073 / ATCC 700928 / UPEC).